Here is a 215-residue protein sequence, read N- to C-terminus: 3-demethoxyubiquinol 3-hydroxylase (215 aa).

Fe cation-binding residues include glutamate 64, glutamate 94, histidine 97, glutamate 146, glutamate 178, and histidine 181.

It belongs to the COQ7 family. The cofactor is Fe cation.

The protein resides in the cell membrane. The catalysed reaction is a 5-methoxy-2-methyl-3-(all-trans-polyprenyl)benzene-1,4-diol + AH2 + O2 = a 3-demethylubiquinol + A + H2O. It participates in cofactor biosynthesis; ubiquinone biosynthesis. Its function is as follows. Catalyzes the hydroxylation of 2-nonaprenyl-3-methyl-6-methoxy-1,4-benzoquinol during ubiquinone biosynthesis. The polypeptide is 3-demethoxyubiquinol 3-hydroxylase (Pseudomonas putida (strain GB-1)).